A 64-amino-acid polypeptide reads, in one-letter code: Prokaryotic ubiquitin-like protein Pup (64 aa).

The tract at residues 20–58 (QELTLAASHVVSDVSEVDDLLDEIDGLLAENAEDFVTGF) is ARC ATPase binding. Glu64 participates in a covalent cross-link: Isoglutamyl lysine isopeptide (Glu-Lys) (interchain with K-? in acceptor proteins).

This sequence belongs to the prokaryotic ubiquitin-like protein family. Strongly interacts with the proteasome-associated ATPase ARC through a hydrophobic interface; the interacting region of Pup lies in its C-terminal half. There is one Pup binding site per ARC hexamer ring.

It functions in the pathway protein degradation; proteasomal Pup-dependent pathway. Functionally, protein modifier that is covalently attached to lysine residues of substrate proteins, thereby targeting them for proteasomal degradation. The tagging system is termed pupylation. The sequence is that of Prokaryotic ubiquitin-like protein Pup from Rothia mucilaginosa (strain DY-18) (Stomatococcus mucilaginosus).